Reading from the N-terminus, the 549-residue chain is Protein EPD1 (549 aa).

The signal sequence occupies residues 1-22 (MLLNSLFPSILAAATFVTSAAA). N-linked (GlcNAc...) asparagine glycans are attached at residues asparagine 40 and asparagine 59. Cysteines 72 and 101 form a disulfide. N-linked (GlcNAc...) asparagine glycosylation is found at asparagine 147 and asparagine 163. Intrachain disulfides connect cysteine 214–cysteine 347, cysteine 232–cysteine 263, cysteine 369–cysteine 420, cysteine 378–cysteine 444, and cysteine 397–cysteine 402. The segment covering 336-356 (AESASGVSRTSCPTNTDNWEA) has biased composition (polar residues). A disordered region spans residues 336-361 (AESASGVSRTSCPTNTDNWEASTELP). Residue asparagine 383 is glycosylated (N-linked (GlcNAc...) asparagine). N-linked (GlcNAc...) asparagine glycosylation is found at asparagine 408 and asparagine 438. A disordered region spans residues 479–519 (SVRTDTSEATTDSGSGSSNSGSASSSKSTSSSTSSGSSGSK). Over residues 487 to 519 (ATTDSGSGSSNSGSASSSKSTSSSTSSGSSGSK) the composition is skewed to low complexity.

The protein belongs to the glycosyl hydrolase 72 family.

It localises to the cell membrane. The sequence is that of Protein EPD1 (EPD1) from Candida maltosa (Yeast).